Reading from the N-terminus, the 358-residue chain is Serine/threonine-protein phosphatase 2A activator (358 aa).

Residues 1–20 (MAEGERQPPPDSSEEAPPAT) form a disordered region. Ala2 is modified (N-acetylalanine). ATP-binding residues include Arg183, Thr188, and Gly189. The Mg(2+) site is built by Gly243 and Asp249. ATP-binding residues include Pro339, Gln342, and His343.

Belongs to the PTPA-type PPIase family. In terms of assembly, associates with PP2A heterodimeric core enzyme PP2A(D), composed of a 36 kDa catalytic subunit (subunit C) and a 65 kDa constant regulatory subunit (PR65 or subunit A). Interacts with the catalytic subunit PPP2CA (via C-terminus). Interacts with PPP2CB. In terms of tissue distribution, widely expressed.

The protein localises to the cytoplasm. It is found in the nucleus. It carries out the reaction [protein]-peptidylproline (omega=180) = [protein]-peptidylproline (omega=0). PPIases accelerate the folding of proteins. It catalyzes the cis-trans isomerization of proline imidic peptide bonds in oligopeptides. Acts as a regulatory subunit for serine/threonine-protein phosphatase 2A (PP2A). Modulates PP2A activity or substrate specificity, probably by inducing a conformational change in the catalytic subunit, a proposed direct target of the PPIase. Can reactivate inactive phosphatase PP2A-phosphatase methylesterase complexes (PP2A(i)) in presence of ATP and Mg(2+). Reversibly stimulates the variable phosphotyrosyl phosphatase activity of PP2A core heterodimer PP2A(D) in presence of ATP and Mg(2+) (in vitro). The phosphotyrosyl phosphatase activity is dependent of an ATPase activity of the PP2A(D):PPP2R4 complex. Is involved in apoptosis; the function appears to be independent from PP2A. The sequence is that of Serine/threonine-protein phosphatase 2A activator from Homo sapiens (Human).